A 395-amino-acid chain; its full sequence is S-adenosylmethionine synthase (395 aa).

His-15 is an ATP binding site. Asp-17 is a binding site for Mg(2+). Residue Glu-43 coordinates K(+). L-methionine contacts are provided by Glu-56 and Gln-99. A flexible loop region spans residues 99-109 (QSADIALGVDE). Residues 174 to 176 (DGK), 240 to 241 (RF), Asp-249, 255 to 256 (RK), Ala-272, and Lys-276 each bind ATP. L-methionine is bound at residue Asp-249. Lys-280 provides a ligand contact to L-methionine.

It belongs to the AdoMet synthase family. As to quaternary structure, homotetramer; dimer of dimers. The cofactor is Mg(2+). Requires K(+) as cofactor.

Its subcellular location is the cytoplasm. It catalyses the reaction L-methionine + ATP + H2O = S-adenosyl-L-methionine + phosphate + diphosphate. The protein operates within amino-acid biosynthesis; S-adenosyl-L-methionine biosynthesis; S-adenosyl-L-methionine from L-methionine: step 1/1. Catalyzes the formation of S-adenosylmethionine (AdoMet) from methionine and ATP. The overall synthetic reaction is composed of two sequential steps, AdoMet formation and the subsequent tripolyphosphate hydrolysis which occurs prior to release of AdoMet from the enzyme. This is S-adenosylmethionine synthase from Alkaliphilus oremlandii (strain OhILAs) (Clostridium oremlandii (strain OhILAs)).